Here is a 245-residue protein sequence, read N- to C-terminus: Hydrolase pyvD (245 aa).

Catalysis depends on residues Cys133, Asp179, and His211.

Belongs to the dienelactone hydrolase family.

It functions in the pathway secondary metabolite biosynthesis. Hydrolase; part of the gene cluster that mediates the biosynthesis of pyranoviolin A, a pyranonigrin analog with a C-3 methoxy group. Initially, the PKS portion of pyvA synthesizes C-10 carbon chain from 5 molecules of malonyl-CoA, which is then condensed with the thiolation (T) domain-bound glycine activated by the adenylation (A) domain. The subsequent chain release by Dieckmann condensation (DKC) could be catalyzed by the TE domain present at the C-terminus of pyvA and/or the alpha/beta hydrolase pyvD, installing the tetramic acid moiety. The FAD-dependent monooxygenase pyvC next epoxidizes one of the olefins of the polyketide part, and the epoxide ring-opening induces the dihydro-gamma-pyrone ring formation. The cytochrome P450 monooxygeanse pyvB would be responsible for the 2 consecutive reactions, in which the dihydro-gamma-pyrone is oxidized to gamma-pyrone and C-7 is hydroxylated to yield pyranonigrin F. Finally, the O-methyltransferase pyvH methylates the C-3 hydroxy group to complete the biosynthesis. This Aspergillus violaceofuscus (strain CBS 115571) protein is Hydrolase pyvD.